The primary structure comprises 102 residues: NADH-quinone oxidoreductase subunit K (102 aa).

3 helical membrane-spanning segments follow: residues 6 to 26 (LGQG…GVLV), 30 to 50 (LLFM…AFIV), and 64 to 84 (FILV…LILL).

This sequence belongs to the complex I subunit 4L family. In terms of assembly, NDH-1 is composed of 14 different subunits. Subunits NuoA, H, J, K, L, M, N constitute the membrane sector of the complex.

The protein localises to the cell inner membrane. It carries out the reaction a quinone + NADH + 5 H(+)(in) = a quinol + NAD(+) + 4 H(+)(out). Its function is as follows. NDH-1 shuttles electrons from NADH, via FMN and iron-sulfur (Fe-S) centers, to quinones in the respiratory chain. The immediate electron acceptor for the enzyme in this species is believed to be ubiquinone. Couples the redox reaction to proton translocation (for every two electrons transferred, four hydrogen ions are translocated across the cytoplasmic membrane), and thus conserves the redox energy in a proton gradient. The chain is NADH-quinone oxidoreductase subunit K from Acidiphilium cryptum (strain JF-5).